The sequence spans 175 residues: ATP synthase subunit b 2 (175 aa).

A helical transmembrane segment spans residues 20 to 40 (LIFWTAVTFVIVLLILKKFAW).

It belongs to the ATPase B chain family. In terms of assembly, F-type ATPases have 2 components, F(1) - the catalytic core - and F(0) - the membrane proton channel. F(1) has five subunits: alpha(3), beta(3), gamma(1), delta(1), epsilon(1). F(0) has four main subunits: a(1), b(2) and c(10-14). The alpha and beta chains form an alternating ring which encloses part of the gamma chain. F(1) is attached to F(0) by a central stalk formed by the gamma and epsilon chains, while a peripheral stalk is formed by the delta and b chains.

It localises to the cell inner membrane. In terms of biological role, f(1)F(0) ATP synthase produces ATP from ADP in the presence of a proton or sodium gradient. F-type ATPases consist of two structural domains, F(1) containing the extramembraneous catalytic core and F(0) containing the membrane proton channel, linked together by a central stalk and a peripheral stalk. During catalysis, ATP synthesis in the catalytic domain of F(1) is coupled via a rotary mechanism of the central stalk subunits to proton translocation. Its function is as follows. Component of the F(0) channel, it forms part of the peripheral stalk, linking F(1) to F(0). This Prosthecochloris aestuarii (strain DSM 271 / SK 413) protein is ATP synthase subunit b 2.